We begin with the raw amino-acid sequence, 690 residues long: Xylosyl- and glucuronyltransferase LARGE2 (690 aa).

The Cytoplasmic portion of the chain corresponds to 1 to 8; that stretch reads MLPRGRPR. A helical; Signal-anchor for type II membrane protein membrane pass occupies residues 9–29; the sequence is AMGAAVLLLLLLLVVGFFLFG. Over 30 to 690 the chain is Lumenal; sequence RDPDYGLGTT…TALQQARSRA (661 aa). Residues Asn51 and Asn78 are each glycosylated (N-linked (GlcNAc...) asparagine). Residues 68–343 form a xylosyltransferase activity region; that stretch reads LHVAIVCAGY…FLGYDGKLLR (276 aa). Mn(2+)-binding residues include Asp172 and Asp174. Residue Asn202 is glycosylated (N-linked (GlcNAc...) asparagine). Residues 344 to 686 are glucuronyltransferase activity; the sequence is RELFGCPNQF…LKYLTALQQA (343 aa). Mn(2+) contacts are provided by Asp492 and Asp494.

In the C-terminal section; belongs to the glycosyltransferase 49 family. It in the N-terminal section; belongs to the glycosyltransferase 8 family. The protein belongs to the glycosyltransferase 8 family. As to quaternary structure, interacts with B4GAT1. Requires Mn(2+) as cofactor. As to expression, highly expressed in the testis and kidney, but weakly expressed in the heart and brain. Expressed during embryogenesis from 7 dpc.

Its subcellular location is the golgi apparatus membrane. The enzyme catalyses 3-O-[beta-D-GlcA-(1-&gt;3)-beta-D-Xyl-(1-&gt;4)-Rib-ol-P-Rib-ol-P-3-beta-D-GalNAc-(1-&gt;3)-beta-D-GlcNAc-(1-&gt;4)-(O-6-P-alpha-D-Man)]-Thr-[protein] + UDP-alpha-D-xylose = 3-O-[alpha-D-Xyl-(1-&gt;3)-beta-D-GlcA-(1-&gt;4)-beta-D-Xyl-(1-&gt;4)-Rib-ol-P-Rib-ol-P-3-beta-D-GalNAc-(1-&gt;3)-beta-D-GlcNAc-(1-&gt;4)-(O-6-P-alpha-D-Man)]-Thr-[protein] + UDP + H(+). It carries out the reaction 3-O-{(1-&gt;[3)-alpha-D-Xyl-(1-&gt;3)-beta-D-GlcA-(1-&gt;](n)-4)-beta-D-Xyl-(1-&gt;4)-Rib-ol-P-Rib-ol-P-3-beta-D-GalNAc-(1-&gt;3)-beta-D-GlcNAc-(1-&gt;4)-O-6-P-alpha-D-Man}-L-Thr-[protein] + UDP-alpha-D-glucuronate = 3-O-{beta-D-GlcA-(1-&gt;[3)-alpha-D-Xyl-(1-&gt;3)-beta-D-GlcA-(1-&gt;](n)-4)-beta-D-Xyl-(1-&gt;4)-Rib-ol-P-Rib-ol-P-3-beta-D-GalNAc-(1-&gt;3)-beta-D-GlcNAc-(1-&gt;4)-O-6-P-alpha-D-Man}-L-Thr-[protein] + UDP + H(+). The catalysed reaction is 3-O-{beta-D-GlcA-(1-&gt;[3)-alpha-D-Xyl-(1-&gt;3)-beta-D-GlcA-(1-&gt;](n)-4)-beta-D-Xyl-(1-&gt;4)-Rib-ol-P-Rib-ol-P-3-beta-D-GalNAc-(1-&gt;3)-beta-D-GlcNAc-(1-&gt;4)-O-6-P-alpha-D-Man}-L-Thr-[protein] + UDP-alpha-D-xylose = 3-O-{(1-&gt;[3)-alpha-D-Xyl-(1-&gt;3)-beta-D-GlcA-(1-&gt;](n+1)-4)-beta-D-Xyl-(1-&gt;4)-Rib-ol-P-Rib-ol-P-3-beta-D-GalNAc-(1-&gt;3)-beta-D-GlcNAc-(1-&gt;4)-O-6-P-alpha-D-Man}-L-Thr-[protein] + UDP + H(+). It functions in the pathway protein modification; protein glycosylation. Functionally, bifunctional glycosyltransferase with both alpha-1,3-xylosyltransferase and beta-1,3-glucuronyltransferase activities involved in the maturation of alpha-dystroglycan (DAG1) by glycosylation leading to DAG1 binding to laminin G-like domain-containing extracellular proteins with high affinity and in a phosphorylated-O-mannosyl trisaccharide dependent manner. Elongates the glucuronyl-beta-1,4-xylose-beta disaccharide primer structure by adding repeating units [-3-Xylose-alpha-1,3-GlcA-beta-1-] to produce a heteropolysaccharide. Supports the maturation of DAG1 more effectively than LARGE1. In addition, can modify both heparan sulfate (HS)- and chondroitin/dermatan sulfate (CS/DS)-proteoglycans (PGs), namely GPC4, with a glycosaminoglycan (GAG)-like polysaccharide composed of xylose and glucuronic acid to confer laminin binding. The chain is Xylosyl- and glucuronyltransferase LARGE2 from Mus musculus (Mouse).